Consider the following 138-residue polypeptide: EFKEAFSLFDKDGDGTITTKELGTVMRSLGQNPTEAELQDMINEVDADGNGTIDFPEFLTMMARKMKETDSEEEIREAFRVFDKDGNGFISAAELRHVMTNLGEKLTDEEVDEMIREADIDGDGQVNYEEFVAMMTSK.

4 consecutive EF-hand domains span residues 1–32, 33–68, 70–105, and 106–138; these read EFKE…LGQN, PTEA…KMKE, DSEE…LGEK, and LTDE…MTSK. Positions 10, 12, 14, 16, 21, 46, 48, 50, 52, 57, 83, 85, 87, 94, 119, 121, 123, 125, and 130 each coordinate Ca(2+).

The protein belongs to the calmodulin family.

Calmodulin mediates the control of a large number of enzymes, ion channels and other proteins by Ca(2+). Among the enzymes to be stimulated by the calmodulin-Ca(2+) complex are a number of protein kinases and phosphatases. The polypeptide is Calmodulin-beta (Arbacia punctulata (Punctuate sea urchin)).